The chain runs to 164 residues: Putative HTH-type transcriptional regulator ORF2 (164 aa).

An HTH rrf2-type domain is found at 2–131; the sequence is RLTTKGRYAV…SGISLADLVA (130 aa).

This is Putative HTH-type transcriptional regulator ORF2 from Azotobacter vinelandii.